The chain runs to 264 residues: Glutamate racemase (264 aa).

Residues 9–10 (DS) and 41–42 (YG) each bind substrate. C72 serves as the catalytic Proton donor/acceptor. 73–74 (NT) lines the substrate pocket. The active-site Proton donor/acceptor is C183. 184 to 185 (TH) provides a ligand contact to substrate.

This sequence belongs to the aspartate/glutamate racemases family.

The catalysed reaction is L-glutamate = D-glutamate. It functions in the pathway cell wall biogenesis; peptidoglycan biosynthesis. Functionally, provides the (R)-glutamate required for cell wall biosynthesis. This Geobacillus kaustophilus (strain HTA426) protein is Glutamate racemase.